A 196-amino-acid polypeptide reads, in one-letter code: Large ribosomal subunit protein mL66 (196 aa).

The transit peptide at 1 to 34 directs the protein to the mitochondrion; it reads MAALRRLVSGCGRQLQAFLAGPAATGWLWLPARG.

This sequence belongs to the bacterial ribosomal protein bS18 family. Mitochondrion-specific ribosomal protein mL66 subfamily. As to quaternary structure, component of the mitochondrial ribosome small subunit (28S) which comprises a 12S rRNA and about 30 distinct proteins.

The protein resides in the mitochondrion. The chain is Large ribosomal subunit protein mL66 (Mrps18a) from Mus musculus (Mouse).